We begin with the raw amino-acid sequence, 436 residues long: Anaerobic glycerol-3-phosphate dehydrogenase subunit B (436 aa).

Belongs to the anaerobic G-3-P dehydrogenase subunit B family. As to quaternary structure, composed of a catalytic GlpA/B dimer and of membrane bound GlpC. Requires FMN as cofactor.

The enzyme catalyses a quinone + sn-glycerol 3-phosphate = dihydroxyacetone phosphate + a quinol. It participates in polyol metabolism; glycerol degradation via glycerol kinase pathway; glycerone phosphate from sn-glycerol 3-phosphate (anaerobic route): step 1/1. Conversion of glycerol 3-phosphate to dihydroxyacetone. Uses fumarate or nitrate as electron acceptor. The protein is Anaerobic glycerol-3-phosphate dehydrogenase subunit B of Vibrio cholerae serotype O1 (strain ATCC 39315 / El Tor Inaba N16961).